The chain runs to 107 residues: Ig kappa chain V-VI region NQ2-17.4.1 (107 aa).

Residues Q1 to C23 form a framework-1 region. The cysteines at positions 23 and 87 are disulfide-linked. Positions S24–H33 are complementarity-determining-1. A framework-2 region spans residues W34–Y48. Residues D49–S55 form a complementarity-determining-2 region. Positions G56–C87 are framework-3. The interval Q88–T96 is complementarity-determining-3. The interval F97–K106 is framework-4.

Anti-2-phenyl oxazolone (PHOX) Antibody. The chain is Ig kappa chain V-VI region NQ2-17.4.1 from Mus musculus (Mouse).